Consider the following 108-residue polypeptide: MSDTEYLARAEAVLAAVERTVDVANDGDHDIDLERNGSVLTLTFENGSKIIVNLQPPMKEVWIAAKAGGFHYRFIDGEWRDTRTGTEFFSALTDYATQQAGLPITFSA.

The protein belongs to the frataxin family.

Functionally, involved in iron-sulfur (Fe-S) cluster assembly. May act as a regulator of Fe-S biogenesis. In Burkholderia cenocepacia (strain ATCC BAA-245 / DSM 16553 / LMG 16656 / NCTC 13227 / J2315 / CF5610) (Burkholderia cepacia (strain J2315)), this protein is Iron-sulfur cluster assembly protein CyaY.